Here is a 277-residue protein sequence, read N- to C-terminus: Formamidopyrimidine-DNA glycosylase (277 aa).

Pro2 serves as the catalytic Schiff-base intermediate with DNA. Glu3 serves as the catalytic Proton donor. Residue Lys58 is the Proton donor; for beta-elimination activity of the active site. DNA-binding residues include His95, Arg113, and Arg158. The FPG-type zinc-finger motif lies at 243–277 (GVYDRANQPCLRCGGVVRQIRQAGRSTYYCTGCQH). The active-site Proton donor; for delta-elimination activity is the Arg267.

The protein belongs to the FPG family. Monomer. It depends on Zn(2+) as a cofactor.

The catalysed reaction is Hydrolysis of DNA containing ring-opened 7-methylguanine residues, releasing 2,6-diamino-4-hydroxy-5-(N-methyl)formamidopyrimidine.. It carries out the reaction 2'-deoxyribonucleotide-(2'-deoxyribose 5'-phosphate)-2'-deoxyribonucleotide-DNA = a 3'-end 2'-deoxyribonucleotide-(2,3-dehydro-2,3-deoxyribose 5'-phosphate)-DNA + a 5'-end 5'-phospho-2'-deoxyribonucleoside-DNA + H(+). Functionally, involved in base excision repair of DNA damaged by oxidation or by mutagenic agents. Acts as a DNA glycosylase that recognizes and removes damaged bases. Has a preference for oxidized purines, such as 7,8-dihydro-8-oxoguanine (8-oxoG). Has AP (apurinic/apyrimidinic) lyase activity and introduces nicks in the DNA strand. Cleaves the DNA backbone by beta-delta elimination to generate a single-strand break at the site of the removed base with both 3'- and 5'-phosphates. The sequence is that of Formamidopyrimidine-DNA glycosylase from Dechloromonas aromatica (strain RCB).